Here is a 117-residue protein sequence, read N- to C-terminus: Putative pterin-4-alpha-carbinolamine dehydratase (117 aa).

Belongs to the pterin-4-alpha-carbinolamine dehydratase family.

It catalyses the reaction (4aS,6R)-4a-hydroxy-L-erythro-5,6,7,8-tetrahydrobiopterin = (6R)-L-erythro-6,7-dihydrobiopterin + H2O. The protein is Putative pterin-4-alpha-carbinolamine dehydratase of Aeromonas salmonicida (strain A449).